A 669-amino-acid polypeptide reads, in one-letter code: Elongation factor G-like protein (669 aa).

One can recognise a tr-type G domain in the interval 7 to 279 (ESLRNVAIVG…VLIKEAPDPS (273 aa)). The segment at 16–23 (GPYGSGKT) is G1. Residue 16 to 23 (GPYGSGKT) participates in GTP binding. A G2 region spans residues 59–63 (QMSVE). The G3 stretch occupies residues 80–83 (DCPG). Residues 80–84 (DCPGS) and 134–137 (NKMD) each bind GTP. A G4 region spans residues 134–137 (NKMD). The segment at 257–259 (AAE) is G5.

This sequence belongs to the TRAFAC class translation factor GTPase superfamily. Classic translation factor GTPase family. EF-G/EF-2 subfamily.

This Synechocystis sp. (strain ATCC 27184 / PCC 6803 / Kazusa) protein is Elongation factor G-like protein.